Consider the following 605-residue polypeptide: Copper resistance protein A (605 aa).

The tat-type signal signal peptide spans Met1 to Ser41. Residues His100, His102, His142, and His144 each coordinate Cu cation. 3 tandem repeats follow at residues Asp382–Met389, Asp414–Met421, and Asp422–Met429. A 3 X 8 AA tandem repeats of D-H-X-X-M-X-G-M region spans residues Asp382–Met429. Cu cation-binding residues include His538, His541, His543, His586, Cys587, His588, His592, and Met597.

This sequence belongs to the multicopper oxidase family. CopA subfamily. Predicted to be exported by the Tat system. The position of the signal peptide cleavage has not been experimentally proven.

It is found in the periplasm. In terms of biological role, required for the copper-inducible expression of copper resistance. May have oxidase activity. This is Copper resistance protein A (pcoA) from Escherichia coli.